Consider the following 355-residue polypeptide: Guanine nucleotide-binding protein G(z) subunit alpha (355 aa).

The segment covering 1–14 (MGCRQSSEEKEAAR) has biased composition (basic and acidic residues). Residues 1–26 (MGCRQSSEEKEAARRSRRIDRHLRSE) form a disordered region. Residue G2 is the site of N-myristoyl glycine attachment. A lipid anchor (S-palmitoyl cysteine) is attached at C3. A G-alpha domain is found at 32-355 (REIKLLLLGT…QNNLKYIGLC (324 aa)). The G1 motif stretch occupies residues 35-48 (KLLLLGTSNSGKST). GTP-binding positions include 40 to 47 (GTSNSGKS), 176 to 182 (LRSRDMT), 201 to 205 (DVGGQ), 270 to 273 (NKKD), and A327. Residues S47 and T182 each contribute to the Mg(2+) site. The interval 174-182 (DILRSRDMT) is G2 motif. Residues 197–206 (FKMVDVGGQR) form a G3 motif region. A G4 motif region spans residues 266–273 (ILFLNKKD). The segment at 325–330 (TCATDT) is G5 motif.

The protein belongs to the G-alpha family. G(i/o/t/z) subfamily. In terms of assembly, G-proteins are composed of 3 units; alpha, beta and gamma. The alpha chain contains the guanine nucleotide binding site. Interacts with ADGRB2.

Its subcellular location is the membrane. In terms of biological role, guanine nucleotide-binding proteins (G proteins) are involved as modulators or transducers in various transmembrane signaling systems. In Rattus norvegicus (Rat), this protein is Guanine nucleotide-binding protein G(z) subunit alpha (Gnaz).